Consider the following 251-residue polypeptide: Ubiquinone/menaquinone biosynthesis C-methyltransferase UbiE (251 aa).

S-adenosyl-L-methionine is bound by residues Thr74, Asp95, and 123 to 124 (DA).

This sequence belongs to the class I-like SAM-binding methyltransferase superfamily. MenG/UbiE family.

The catalysed reaction is a 2-demethylmenaquinol + S-adenosyl-L-methionine = a menaquinol + S-adenosyl-L-homocysteine + H(+). It carries out the reaction a 2-methoxy-6-(all-trans-polyprenyl)benzene-1,4-diol + S-adenosyl-L-methionine = a 5-methoxy-2-methyl-3-(all-trans-polyprenyl)benzene-1,4-diol + S-adenosyl-L-homocysteine + H(+). The protein operates within quinol/quinone metabolism; menaquinone biosynthesis; menaquinol from 1,4-dihydroxy-2-naphthoate: step 2/2. It functions in the pathway cofactor biosynthesis; ubiquinone biosynthesis. Methyltransferase required for the conversion of demethylmenaquinol (DMKH2) to menaquinol (MKH2) and the conversion of 2-polyprenyl-6-methoxy-1,4-benzoquinol (DDMQH2) to 2-polyprenyl-3-methyl-6-methoxy-1,4-benzoquinol (DMQH2). The protein is Ubiquinone/menaquinone biosynthesis C-methyltransferase UbiE of Idiomarina loihiensis (strain ATCC BAA-735 / DSM 15497 / L2-TR).